We begin with the raw amino-acid sequence, 40 residues long: Cell division inhibitor MciZ (40 aa).

As to quaternary structure, interacts with FtsZ. Binds to the C-terminal polymerization interface of FtsZ. Binds to FtsZ filaments.

Highly effective in inhibiting polymerization at low and intermediate concentrations of GTP and only partially effective at high GTP concentrations. In terms of biological role, blocks Z-ring formation in the mother cell during sporulation by inhibiting the polymerization of FtsZ. Binds to the minus end of FtsZ and functions as a filament-capping protein. At high concentrations, is capable of both capping and sequestration of FtsZ. Decreases the GTPase activity of FtsZ. The chain is Cell division inhibitor MciZ from Bacillus subtilis (strain 168).